Here is a 120-residue protein sequence, read N- to C-terminus: Putative B3 domain-containing protein At3g28853 (120 aa).

The TF-B3 DNA-binding region spans 19–120 (INKRLTQSDV…DKSNEVFYII (102 aa)).

The protein localises to the nucleus. This Arabidopsis thaliana (Mouse-ear cress) protein is Putative B3 domain-containing protein At3g28853.